Here is a 664-residue protein sequence, read N- to C-terminus: tRNA uridine 5-carboxymethylaminomethyl modification enzyme MnmG (664 aa).

FAD-binding positions include 14–19, Val126, and Ser183; that span reads GGGHSG. 277–291 serves as a coordination point for NAD(+); sequence GPRYCPSIEDKIDRF. Gln374 is a binding site for FAD.

The protein belongs to the MnmG family. As to quaternary structure, homodimer. Heterotetramer of two MnmE and two MnmG subunits. FAD serves as cofactor.

The protein localises to the cytoplasm. In terms of biological role, NAD-binding protein involved in the addition of a carboxymethylaminomethyl (cmnm) group at the wobble position (U34) of certain tRNAs, forming tRNA-cmnm(5)s(2)U34. In Salinibacter ruber (strain DSM 13855 / M31), this protein is tRNA uridine 5-carboxymethylaminomethyl modification enzyme MnmG.